A 215-amino-acid polypeptide reads, in one-letter code: Translation initiation factor 6 (215 aa).

The protein belongs to the eIF-6 family.

Binds to the 50S ribosomal subunit and prevents its association with the 30S ribosomal subunit to form the 70S initiation complex. This chain is Translation initiation factor 6, found in Archaeoglobus fulgidus (strain ATCC 49558 / DSM 4304 / JCM 9628 / NBRC 100126 / VC-16).